The chain runs to 545 residues: E3 ubiquitin-protein ligase ipaH9.8 (545 aa).

The segment at 1-242 (MLPINNNFSL…YHGPRIYFSM (242 aa)) is interaction with target proteins. LRR repeat units follow at residues 57 to 77 (NSDE…NLPA), 78 to 99 (QITL…PVTL), 100 to 117 (KKLY…VLPP), 118 to 139 (ALES…PDSL), 140 to 157 (LTMN…SLPQ), 158 to 179 (ALKN…SEGN), 182 to 203 (VVRE…ILNL), and 205 to 228 (NECS…QRLT). The segment at 243-250 (SDGQQNTL) is linker. Residues 251-545 (HRPLADAVTA…SENGSQLHHS (295 aa)) form an E3 ubiquitin-protein ligase catalytic domain region. In terms of domain architecture, NEL spans 253–545 (PLADAVTAWF…SENGSQLHHS (293 aa)). Cysteine 337 (glycyl thioester intermediate) is an active-site residue.

The protein belongs to the LRR-containing bacterial E3 ligase family. Also interacts with human and mouse U2AF1 (U2AF35). Post-translationally, ubiquitinated in the presence of host E1 ubiquitin-activating enzyme, E2 ubiquitin-conjugating enzyme and ubiquitin.

Its subcellular location is the secreted. It localises to the host cytoplasm. The protein resides in the host nucleus. The enzyme catalyses S-ubiquitinyl-[E2 ubiquitin-conjugating enzyme]-L-cysteine + [acceptor protein]-L-lysine = [E2 ubiquitin-conjugating enzyme]-L-cysteine + N(6)-ubiquitinyl-[acceptor protein]-L-lysine.. With respect to regulation, exists in an autoinhibited state in the absence of substrate protein, due to interactions of the leucine-rich repeats with NEL domain. Is activated upon binding to a substrate protein. Functionally, effector E3 ubiquitin ligase that interferes with host's ubiquitination pathway and modulates the acute inflammatory responses, thus facilitating bacterial colonization within the host cell. Interacts with IKBKG (NEMO) and TNIP1 (ABIN-1), a ubiquitin-binding adapter protein, which results in TNIP1-dependent 'Lys-27'-linked polyubiquitination of IKBKG. Consequently, polyubiquitinated IKBKG undergoes proteasome-dependent degradation, which perturbs NF-kappa-B activation during bacterial infection. Mediates polyubiquitination of host U2AF1, leading to its proteasomal degradation. Catalyzes 'Lys-48'-linked polyubiquitination and subsequent degradation of a subset of host guanylate-binding proteins (GBP1, GBP2, GBP4 and GBP6), thereby suppressing host cell defense. In contrast, host GBP3 and GBP7 are not ubiquitinated by IpaH9.8. Uses UBE2D2 (UBCH5B) as an E2 ubiquitin-conjugating enzyme. This chain is E3 ubiquitin-protein ligase ipaH9.8 (ipaH9.8), found in Shigella sonnei (strain Ss046).